The sequence spans 239 residues: Purine nucleoside phosphorylase DeoD-type (239 aa).

H5 serves as a coordination point for a purine D-ribonucleoside. Residues G21, R25, R44, and 88–91 (RVGS) each bind phosphate. A purine D-ribonucleoside-binding positions include 180–182 (EME) and 204–205 (SD). D205 acts as the Proton donor in catalysis.

Belongs to the PNP/UDP phosphorylase family. In terms of assembly, homohexamer; trimer of homodimers.

The catalysed reaction is a purine D-ribonucleoside + phosphate = a purine nucleobase + alpha-D-ribose 1-phosphate. It catalyses the reaction a purine 2'-deoxy-D-ribonucleoside + phosphate = a purine nucleobase + 2-deoxy-alpha-D-ribose 1-phosphate. Catalyzes the reversible phosphorolytic breakdown of the N-glycosidic bond in the beta-(deoxy)ribonucleoside molecules, with the formation of the corresponding free purine bases and pentose-1-phosphate. This is Purine nucleoside phosphorylase DeoD-type from Klebsiella pneumoniae (strain 342).